The sequence spans 781 residues: Isoquinoline 1-oxidoreductase subunit beta (781 aa).

In terms of assembly, heterodimer of an alpha chain and a beta chain.

The catalysed reaction is isoquinoline + A + H2O = isoquinolin-1(2H)-one + AH2. Its function is as follows. Specific towards N-containing N-heterocyclic substrates, including isoquinoline, isoquinolin-5-ol, phthalazine and quinazoline. In Brevundimonas diminuta (Pseudomonas diminuta), this protein is Isoquinoline 1-oxidoreductase subunit beta (iorB).